The sequence spans 309 residues: MSIRIIPQDELGSSEKRTADMIPPLLFPRLKNVYNRRAERLRELAENNPLGDYLRFAALIAHAQEVVLYDHPLEMDLTARIKEANDQGKPPLDIHVLPRDKHWQKLLHSLIAELKPEMSGPALAVIENLEKASEQELEQMASALFASDFASVSSDKAPFIWAALSLYWAQMASLIPGKARAEYGEARQYCPVCGSMPVSSMVQIGTTQGLRYLHCNLCETEWHVVRVKCSNCEQSRDLHYWSLENEQAAVKAESCGDCGTYLKILYQEKDPKVEAVADDLASLVLDARMEQEGFARSSINPFLFPGEGE.

Belongs to the FdhE family.

It is found in the cytoplasm. Its function is as follows. Necessary for formate dehydrogenase activity. The protein is Protein FdhE of Salmonella typhimurium (strain LT2 / SGSC1412 / ATCC 700720).